A 1224-amino-acid chain; its full sequence is DNA-directed RNA polymerase subunit beta (1224 aa).

The protein belongs to the RNA polymerase beta chain family. The RNAP catalytic core consists of 2 alpha, 1 beta, 1 beta' and 1 omega subunit. When a sigma factor is associated with the core the holoenzyme is formed, which can initiate transcription.

It carries out the reaction RNA(n) + a ribonucleoside 5'-triphosphate = RNA(n+1) + diphosphate. Functionally, DNA-dependent RNA polymerase catalyzes the transcription of DNA into RNA using the four ribonucleoside triphosphates as substrates. The protein is DNA-directed RNA polymerase subunit beta of Pelotomaculum thermopropionicum (strain DSM 13744 / JCM 10971 / SI).